The chain runs to 396 residues: Multidrug resistance protein MdtL (396 aa).

Residues Met-1–Tyr-4 are Cytoplasmic-facing. A helical transmembrane segment spans residues Leu-5–Gly-25. Over Leu-26 to His-41 the chain is Periplasmic. Residues Ile-42–Ala-62 form a helical membrane-spanning segment. The Cytoplasmic portion of the chain corresponds to Asp-63–Arg-64. Residues Ile-65–Ala-85 traverse the membrane as a helical segment. At Ala-86 to Asp-92 the chain is on the periplasmic side. The helical transmembrane segment at Leu-93–Phe-113 threads the bilayer. Over Ala-114–Met-131 the chain is Cytoplasmic. Residues Val-132 to Leu-152 form a helical membrane-spanning segment. Over Arg-153–Pro-157 the chain is Periplasmic. A helical membrane pass occupies residues Ser-158–Leu-178. Topologically, residues Arg-179–Val-209 are cytoplasmic. A helical transmembrane segment spans residues Val-210 to Ile-230. Topologically, residues Met-231–Ser-242 are periplasmic. Residues Asn-243–Leu-263 form a helical membrane-spanning segment. The Cytoplasmic portion of the chain corresponds to Asn-264 to Thr-277. Transmembrane regions (helical) follow at residues Leu-278–Phe-298 and Asn-299–Ser-319. The Cytoplasmic portion of the chain corresponds to Gln-320–Ser-333. A helical membrane pass occupies residues Ser-334–Leu-354. The Periplasmic portion of the chain corresponds to Glu-355–Asn-360. A helical transmembrane segment spans residues Ile-361 to Pro-381. The Cytoplasmic segment spans residues Lys-382–Ala-396.

It belongs to the major facilitator superfamily. DHA1 family. MdtL (TC 2.A.1.2.22) subfamily.

It localises to the cell inner membrane. This is Multidrug resistance protein MdtL from Shewanella sp. (strain ANA-3).